The chain runs to 393 residues: MKNFRLSEKEVKTLAKRIPTPFLVASLDKVEENYQFMRRHLPRAGVFYAMKANPTPEILSLLAGLGSHFDVASAGEMEILHELGVDGSQMIYANPVKDARGLKAAADYNVRRFTFDDPSEIDKMAKAVPGADVLVRIAVRNNKALVDLNTKFGAPVEEALDLLKAAQDAGLHAMGICFHVGSQSLSTAAYEEALLVARRLFDEAEEMGMHLTDLDIGGGFPVPDAKGLNVDLAAMMEAINKQIDRLFPDTAVWTEPGRYMCGTAVNLVTSVIGTKTRGEQPWYILDEGIYGCFSGIMYDHWTYPLHCFGKGNKKPSTFGGPSCDGIDVLYRDFMAPELKIGDKVLVTEMGSYTSVSATRFNGFYLAPTIIFEDQPEYAARLTEDDDVKKKAAV.

Lys51 is modified (N6-(pyridoxal phosphate)lysine). Cys323 functions as the Proton donor; shared with dimeric partner in the catalytic mechanism.

Belongs to the Orn/Lys/Arg decarboxylase class-II family. In terms of assembly, homodimer. Requires pyridoxal 5'-phosphate as cofactor.

The catalysed reaction is L-lysine + H(+) = cadaverine + CO2. It catalyses the reaction L-ornithine + H(+) = putrescine + CO2. It functions in the pathway amine and polyamine biosynthesis; putrescine biosynthesis via L-ornithine pathway; putrescine from L-ornithine: step 1/1. With respect to regulation, inhibited competitively by both alpha-difluoromethyllysine and alpha-difluoromethylornithine. In terms of biological role, decarboxylates both L-lysine and L-ornithine with similar catalytic efficiency. The sequence is that of Lysine/ornithine decarboxylase (ldc) from Selenomonas ruminantium.